Consider the following 251-residue polypeptide: Ubiquinone/menaquinone biosynthesis C-methyltransferase UbiE (251 aa).

S-adenosyl-L-methionine-binding positions include Thr-74, Asp-95, 123–124 (NA), and Ser-140.

Belongs to the class I-like SAM-binding methyltransferase superfamily. MenG/UbiE family.

It catalyses the reaction a 2-demethylmenaquinol + S-adenosyl-L-methionine = a menaquinol + S-adenosyl-L-homocysteine + H(+). The enzyme catalyses a 2-methoxy-6-(all-trans-polyprenyl)benzene-1,4-diol + S-adenosyl-L-methionine = a 5-methoxy-2-methyl-3-(all-trans-polyprenyl)benzene-1,4-diol + S-adenosyl-L-homocysteine + H(+). It participates in quinol/quinone metabolism; menaquinone biosynthesis; menaquinol from 1,4-dihydroxy-2-naphthoate: step 2/2. It functions in the pathway cofactor biosynthesis; ubiquinone biosynthesis. Its function is as follows. Methyltransferase required for the conversion of demethylmenaquinol (DMKH2) to menaquinol (MKH2) and the conversion of 2-polyprenyl-6-methoxy-1,4-benzoquinol (DDMQH2) to 2-polyprenyl-3-methyl-6-methoxy-1,4-benzoquinol (DMQH2). The polypeptide is Ubiquinone/menaquinone biosynthesis C-methyltransferase UbiE (Klebsiella pneumoniae (strain 342)).